Reading from the N-terminus, the 212-residue chain is Large ribosomal subunit protein uL3 (212 aa).

Positions 136–155 (THGNSLSHRSNGSIGQNQTP) are enriched in polar residues. Residues 136–157 (THGNSLSHRSNGSIGQNQTPGR) form a disordered region. Q153 carries the N5-methylglutamine modification.

The protein belongs to the universal ribosomal protein uL3 family. As to quaternary structure, part of the 50S ribosomal subunit. Forms a cluster with proteins L14 and L19. In terms of processing, methylated by PrmB.

One of the primary rRNA binding proteins, it binds directly near the 3'-end of the 23S rRNA, where it nucleates assembly of the 50S subunit. In Shewanella putrefaciens (strain CN-32 / ATCC BAA-453), this protein is Large ribosomal subunit protein uL3.